A 356-amino-acid polypeptide reads, in one-letter code: MRFDLERPSQNASSHRVAVLLINLGTPDAPTPRAVRRYLAQFLSDPRVVEIPALLWQIILRLLILPFRGVASAKKYAAVWMPEGSPLRVNTEKQVEGLRHLLQLNDYTVLVDYAMRYGTPGIPAMLNQLKLAGAERVLLMPMYPQYSSSTTATAFDDAFSALKRMRNQPEIRTVRQYADHPAYIAALAAQVHNYWHQHGRPDFAAGDKLVLSFHGVPKRTLDLGDPYHEQCQQTGALLMQALELTQVECRITFQSRFGKAEWLQPYTAPTLKELGAAGVRRADVFCPGFTADCLETIEEIGMEVRDEFLHAGGKDFHRIPCLNASQAWIAALGEIVAQNLQGWPVQALPVPHTTGA.

Positions 214 and 295 each coordinate Fe cation.

It belongs to the ferrochelatase family.

It localises to the cytoplasm. It carries out the reaction heme b + 2 H(+) = protoporphyrin IX + Fe(2+). It functions in the pathway porphyrin-containing compound metabolism; protoheme biosynthesis; protoheme from protoporphyrin-IX: step 1/1. Functionally, catalyzes the ferrous insertion into protoporphyrin IX. The chain is Ferrochelatase from Paraburkholderia phytofirmans (strain DSM 17436 / LMG 22146 / PsJN) (Burkholderia phytofirmans).